The following is a 32-amino-acid chain: MSDIN-like toxin proprotein 3 (32 aa).

Positions 1 to 10 (MSDINATRLP) are excised as a propeptide. A cross-link (cyclopeptide (Val-Pro)) is located at residues 11–17 (VWIGYSP). A propeptide spanning residues 18–32 (CVGDDAVALLNRGEG) is cleaved from the precursor.

The protein belongs to the MSDIN fungal toxin family. Processed by the macrocyclase-peptidase enzyme POPB to yield a toxic cyclic heptapeptide. POPB first removes 10 residues from the N-terminus. Conformational trapping of the remaining peptide forces the enzyme to release this intermediate rather than proceed to macrocyclization. The enzyme rebinds the remaining peptide in a different conformation and catalyzes macrocyclization of the N-terminal 7 residues.

In terms of biological role, probable toxin that belongs to the MSDIN-like toxin family responsible for a large number of food poisoning cases and deaths. The protein is MSDIN-like toxin proprotein 3 of Amanita fuligineoides.